A 369-amino-acid chain; its full sequence is S-adenosylmethionine:tRNA ribosyltransferase-isomerase (369 aa).

It belongs to the QueA family. Monomer.

It is found in the cytoplasm. It catalyses the reaction 7-aminomethyl-7-carbaguanosine(34) in tRNA + S-adenosyl-L-methionine = epoxyqueuosine(34) in tRNA + adenine + L-methionine + 2 H(+). It participates in tRNA modification; tRNA-queuosine biosynthesis. Functionally, transfers and isomerizes the ribose moiety from AdoMet to the 7-aminomethyl group of 7-deazaguanine (preQ1-tRNA) to give epoxyqueuosine (oQ-tRNA). This is S-adenosylmethionine:tRNA ribosyltransferase-isomerase from Acaryochloris marina (strain MBIC 11017).